A 377-amino-acid polypeptide reads, in one-letter code: Chaperone protein DnaJ (377 aa).

Positions 5-69 (DYYEVLGVSK…NKRANYDQFG (65 aa)) constitute a J domain. The CR-type zinc finger occupies 134–216 (GTEKEISIRK…CHGKGTETKN (83 aa)). Zn(2+) contacts are provided by Cys147, Cys150, Cys164, Cys167, Cys190, Cys193, Cys204, and Cys207. 4 CXXCXGXG motif repeats span residues 147-154 (CETCDGSG), 164-171 (CHYCNGSG), 190-197 (CPVCNGTG), and 204-211 (CPTCHGKG).

Belongs to the DnaJ family. In terms of assembly, homodimer. Zn(2+) is required as a cofactor.

The protein resides in the cytoplasm. Participates actively in the response to hyperosmotic and heat shock by preventing the aggregation of stress-denatured proteins and by disaggregating proteins, also in an autonomous, DnaK-independent fashion. Unfolded proteins bind initially to DnaJ; upon interaction with the DnaJ-bound protein, DnaK hydrolyzes its bound ATP, resulting in the formation of a stable complex. GrpE releases ADP from DnaK; ATP binding to DnaK triggers the release of the substrate protein, thus completing the reaction cycle. Several rounds of ATP-dependent interactions between DnaJ, DnaK and GrpE are required for fully efficient folding. Also involved, together with DnaK and GrpE, in the DNA replication of plasmids through activation of initiation proteins. The chain is Chaperone protein DnaJ from Staphylococcus carnosus (strain TM300).